The following is a 77-amino-acid chain: Acyl carrier protein (77 aa).

The region spanning 2-77 is the Carrier domain; it reads SDIADRVKKI…DAVKFIQGAV (76 aa). Position 37 is an O-(pantetheine 4'-phosphoryl)serine (Ser37).

The protein belongs to the acyl carrier protein (ACP) family. In terms of processing, 4'-phosphopantetheine is transferred from CoA to a specific serine of apo-ACP by AcpS. This modification is essential for activity because fatty acids are bound in thioester linkage to the sulfhydryl of the prosthetic group.

Its subcellular location is the cytoplasm. It functions in the pathway lipid metabolism; fatty acid biosynthesis. In terms of biological role, carrier of the growing fatty acid chain in fatty acid biosynthesis. The protein is Acyl carrier protein of Paracoccus denitrificans (strain Pd 1222).